A 199-amino-acid chain; its full sequence is NAD(P)H dehydrogenase (quinone) (199 aa).

One can recognise a Flavodoxin-like domain in the interval 4-190; sequence VLVLYYSAYG…AGARYQGKTI (187 aa). FMN-binding positions include 10–15 and 78–80; these read SAYGHI and TRF. Residue Tyr12 participates in NAD(+) binding. Trp98 is a binding site for substrate. Residues 113-119 and His134 contribute to the FMN site; that span reads STATQHG.

It belongs to the WrbA family. It depends on FMN as a cofactor.

It catalyses the reaction a quinone + NADH + H(+) = a quinol + NAD(+). The enzyme catalyses a quinone + NADPH + H(+) = a quinol + NADP(+). This Rhodopseudomonas palustris (strain HaA2) protein is NAD(P)H dehydrogenase (quinone).